The primary structure comprises 66 residues: Large ribosomal subunit protein bL33c (66 aa).

It belongs to the bacterial ribosomal protein bL33 family.

It is found in the plastid. This is Large ribosomal subunit protein bL33c from Cuscuta gronovii (Common dodder).